The chain runs to 417 residues: Probable lysophospholipase BODYGUARD 4 (417 aa).

The signal sequence occupies residues 1–49 (MSFPRKFGTAIHAALSFIVFFFLDLLDAILCVVYEFVDEILEENSTGCY). A lipid anchor (N-palmitoyl cysteine) is attached at Cys50. In terms of domain architecture, AB hydrolase-1 spans 150–259 (VIFIHGFMGS…PPYFPSSVEG (110 aa)). The active site involves His154. The active-site Nucleophile is the Ser225. Residues Asp367 and His395 each act as charge relay system in the active site.

Expressed in epidermal cells.

It localises to the cell membrane. It is found in the secreted. The protein localises to the cell wall. Functionally, involved in cuticle development and morphogenesis. The protein is Probable lysophospholipase BODYGUARD 4 of Arabidopsis thaliana (Mouse-ear cress).